We begin with the raw amino-acid sequence, 363 residues long: UDP-N-acetylglucosamine--N-acetylmuramyl-(pentapeptide) pyrophosphoryl-undecaprenol N-acetylglucosamine transferase (363 aa).

UDP-N-acetyl-alpha-D-glucosamine contacts are provided by residues 14–16, N122, R163, S190, and Q285; that span reads TGG.

The protein belongs to the glycosyltransferase 28 family. MurG subfamily.

The protein resides in the cell inner membrane. The enzyme catalyses di-trans,octa-cis-undecaprenyl diphospho-N-acetyl-alpha-D-muramoyl-L-alanyl-D-glutamyl-meso-2,6-diaminopimeloyl-D-alanyl-D-alanine + UDP-N-acetyl-alpha-D-glucosamine = di-trans,octa-cis-undecaprenyl diphospho-[N-acetyl-alpha-D-glucosaminyl-(1-&gt;4)]-N-acetyl-alpha-D-muramoyl-L-alanyl-D-glutamyl-meso-2,6-diaminopimeloyl-D-alanyl-D-alanine + UDP + H(+). It participates in cell wall biogenesis; peptidoglycan biosynthesis. In terms of biological role, cell wall formation. Catalyzes the transfer of a GlcNAc subunit on undecaprenyl-pyrophosphoryl-MurNAc-pentapeptide (lipid intermediate I) to form undecaprenyl-pyrophosphoryl-MurNAc-(pentapeptide)GlcNAc (lipid intermediate II). The protein is UDP-N-acetylglucosamine--N-acetylmuramyl-(pentapeptide) pyrophosphoryl-undecaprenol N-acetylglucosamine transferase of Prochlorococcus marinus (strain AS9601).